The sequence spans 552 residues: Putative transport protein HSM_0534 (552 aa).

5 consecutive transmembrane segments (helical) span residues 4-24, 28-48, 67-87, 95-115, and 157-177; these read IAIT…IGHW, GVGL…HFMN, LILF…ASLL, GLAT…YKVV, and MAYA…MWLI. RCK C-terminal domains lie at 190-275 and 277-360; these read KQFQ…VIGE and IDMP…IIGN. The next 6 helical transmembrane spans lie at 370–390, 402–424, 438–458, 463–483, 495–515, and 529–549; these read MLPV…PFYI, AGGP…LYWF, IVLF…DTLV, LEWM…TGII, LCGL…ANAI, and VYPL…ILLW.

The protein belongs to the AAE transporter (TC 2.A.81) family. YidE subfamily.

Its subcellular location is the cell membrane. This Histophilus somni (strain 2336) (Haemophilus somnus) protein is Putative transport protein HSM_0534.